The primary structure comprises 664 residues: Methionine--tRNA ligase (664 aa).

Residues 15–25 (YYPSGKAHIGH) carry the 'HIGH' region motif. The 'KMSKS' region signature appears at 310–314 (KMSKS). An ATP-binding site is contributed by Lys-313. The 102-residue stretch at 563–664 (DFDKIDLRVA…SALPNGAKVK (102 aa)) folds into the tRNA-binding domain.

It belongs to the class-I aminoacyl-tRNA synthetase family. MetG type 2B subfamily. As to quaternary structure, homodimer.

The protein localises to the cytoplasm. It catalyses the reaction tRNA(Met) + L-methionine + ATP = L-methionyl-tRNA(Met) + AMP + diphosphate. In terms of biological role, is required not only for elongation of protein synthesis but also for the initiation of all mRNA translation through initiator tRNA(fMet) aminoacylation. The chain is Methionine--tRNA ligase (metG) from Listeria monocytogenes serovar 1/2a (strain ATCC BAA-679 / EGD-e).